Reading from the N-terminus, the 272-residue chain is MMACHC-like protein (272 aa).

Substrate contacts are provided by residues Asp121, 132-135 (ILMQ), and 146-148 (YYQ).

The protein belongs to the MMACHC family. The cofactor is FAD. FMN is required as a cofactor.

Its subcellular location is the cytoplasm. In terms of biological role, catalyzes the reductive dealkylation of cyanocobalamin to cob(II)alamin, using FAD or FMN as cofactor and NADPH as cosubstrate. Can also catalyze the glutathione-dependent reductive demethylation of methylcobalamin, and, with much lower efficiency, the glutathione-dependent reductive demethylation of adenosylcobalamin. Under anaerobic conditions cob(I)alamin is the first product; it is highly reactive and is converted to aquocob(II)alamin in the presence of oxygen. Binds cyanocobalamin, adenosylcobalamin, methylcobalamin and other, related vitamin B12 derivatives. The polypeptide is MMACHC-like protein (cblc-1) (Caenorhabditis elegans).